Reading from the N-terminus, the 198-residue chain is MGIRHELDILLVSENLALKNVELLKGDSYGCTINIKVNQQKKLDFIIILRPDWTEVRNVKKINMVCNGVVIDTTLIKKSFYEEVYSSSVTVFQNTTVEFFSDTSKKYKEEYPIVNINTIKRYYEIKDSRMTCINFESPISDYDQVNYLKDYINISDDYYLYDACDDCIISSDDDDDNDNADDDEEDDDEVNDIEDDYE.

The interval 171-198 (SDDDDDNDNADDDEEDDDEVNDIEDDYE) is disordered.

It belongs to the poxviridae C7 protein family.

In terms of biological role, plays a role for multiplication of the virus in different cell types. This is Probable host range protein 2 from Bos taurus (Bovine).